A 77-amino-acid polypeptide reads, in one-letter code: U-actitoxin-Avd12a (77 aa).

Positions 1-23 are cleaved as a signal peptide; the sequence is MALFRMLFLCAVLVLLTSKEGMS. A propeptide spanning residues 24 to 29 is cleaved from the precursor; the sequence is YEEPEN. The 43-residue stretch at 31 to 73 folds into the EGF-like domain; sequence EGVACTGQYAESFCLNGGTCRYIQSIGEYYCICNGDYTGHRCE. 3 disulfide bridges follow: cysteine 35-cysteine 50, cysteine 44-cysteine 61, and cysteine 63-cysteine 72.

The protein belongs to the EGF domain peptide family.

It localises to the secreted. The protein localises to the nematocyst. In terms of biological role, has both toxic and EGF activity. Its EGF activity consists of rounding cells (morphological change) and inducing tyrosine phosphorylation of the EGFR in A431 cells, but with a lower potency that human EGF. This is U-actitoxin-Avd12a from Anemonia viridis (Snakelocks anemone).